Here is a 41-residue protein sequence, read N- to C-terminus: Chymotrypsin inhibitor (41 aa).

Functionally, inhibits chymotrypsin. The sequence is that of Chymotrypsin inhibitor from Eisenia hortensis (European nightcrawler).